The chain runs to 511 residues: Histidine ammonia-lyase (511 aa).

The 5-imidazolinone (Ala-Gly) cross-link spans 142 to 144 (ASG). The residue at position 143 (S143) is a 2,3-didehydroalanine (Ser).

Belongs to the PAL/histidase family. In terms of processing, contains an active site 4-methylidene-imidazol-5-one (MIO), which is formed autocatalytically by cyclization and dehydration of residues Ala-Ser-Gly.

The protein localises to the cytoplasm. It catalyses the reaction L-histidine = trans-urocanate + NH4(+). Its pathway is amino-acid degradation; L-histidine degradation into L-glutamate; N-formimidoyl-L-glutamate from L-histidine: step 1/3. The chain is Histidine ammonia-lyase from Chelativorans sp. (strain BNC1).